Here is a 304-residue protein sequence, read N- to C-terminus: 3-diazoavenalumate denitrifying reductase (304 aa).

This sequence belongs to the NAD(P)-dependent epimerase/dehydratase family.

The catalysed reaction is 3-diazoavenalumate + NADPH + H(+) = avenalumate + N2 + NADP(+). It catalyses the reaction 3-diazoavenalumate + NADH + H(+) = avenalumate + N2 + NAD(+). The enzyme catalyses (E)-3-diazocoumarate + NADPH = N2 + (E)-4-coumarate + NADP(+). It carries out the reaction (E)-3-diazocoumarate + NADH = N2 + (E)-4-coumarate + NAD(+). Oxidoreductase involved in the biosynthesis of avenalumic acid (AVA). Catalyzes the denitrification of 3-diazoavenalumic acid (3-DAA) to produce AVA. It can also act on 3-diazocoumaric acid (3-DCA). Can use NADPH or NADH as a reductant, with a preference for NADPH. The polypeptide is 3-diazoavenalumate denitrifying reductase (Streptomyces sp).